The sequence spans 138 residues: MSNHRILHTMLRVGDLDKSIEFYTQVMGMSLLRKNENTEYKYTLAFLGYGDESQGAVIELTYNWGVADYEKGNAYGHIAIGVDDIYATCDTIKAAGGIVTREPGPVKGGTTHIAFVKDPDGYMIELIQNKQAHAGLEG.

The region spanning 5-129 (RILHTMLRVG…DGYMIELIQN (125 aa)) is the VOC domain. His-8 is a Ni(2+) binding site. A substrate-binding site is contributed by Arg-12. Glu-59 is a binding site for Ni(2+). The substrate site is built by Asn-63 and His-77. Residues His-77 and Glu-125 each coordinate Ni(2+). The active-site Proton donor/acceptor is Glu-125.

It belongs to the glyoxalase I family. Ni(2+) serves as cofactor.

The enzyme catalyses (R)-S-lactoylglutathione = methylglyoxal + glutathione. It functions in the pathway secondary metabolite metabolism; methylglyoxal degradation; (R)-lactate from methylglyoxal: step 1/2. In terms of biological role, catalyzes the conversion of hemimercaptal, formed from methylglyoxal and glutathione, to S-lactoylglutathione. This Vibrio cholerae serotype O1 (strain ATCC 39315 / El Tor Inaba N16961) protein is Probable lactoylglutathione lyase (gloA).